Reading from the N-terminus, the 470-residue chain is Glutamate--tRNA ligase 2 (470 aa).

The 'HIGH' region motif lies at 11 to 21; that stretch reads PSPTGHLHLGG. Residues 238–242 carry the 'KMSKS' region motif; sequence KLSKR. Lysine 241 contributes to the ATP binding site.

This sequence belongs to the class-I aminoacyl-tRNA synthetase family. Glutamate--tRNA ligase type 1 subfamily. Monomer.

The protein localises to the cytoplasm. The catalysed reaction is tRNA(Glu) + L-glutamate + ATP = L-glutamyl-tRNA(Glu) + AMP + diphosphate. Its function is as follows. Catalyzes the attachment of glutamate to tRNA(Glu) in a two-step reaction: glutamate is first activated by ATP to form Glu-AMP and then transferred to the acceptor end of tRNA(Glu). This chain is Glutamate--tRNA ligase 2, found in Ehrlichia ruminantium (strain Gardel).